The primary structure comprises 406 residues: Aspartokinase (406 aa).

The ACT domain maps to isoleucine 342–cysteine 406.

Belongs to the aspartokinase family.

The enzyme catalyses L-aspartate + ATP = 4-phospho-L-aspartate + ADP. It functions in the pathway amino-acid biosynthesis; L-lysine biosynthesis via DAP pathway; (S)-tetrahydrodipicolinate from L-aspartate: step 1/4. Its pathway is amino-acid biosynthesis; L-methionine biosynthesis via de novo pathway; L-homoserine from L-aspartate: step 1/3. The protein operates within amino-acid biosynthesis; L-threonine biosynthesis; L-threonine from L-aspartate: step 1/5. In Rickettsia bellii (strain RML369-C), this protein is Aspartokinase (lysC).